Reading from the N-terminus, the 386-residue chain is Cell division protein FtsZ (386 aa).

GTP-binding positions include 20–24 (GGGGN), 107–109 (GTG), glutamate 138, arginine 142, and asparagine 186. Residues 350-377 (LNQEQKTAAKAVNEQNAQGSKEPDYLDI) are disordered.

This sequence belongs to the FtsZ family. As to quaternary structure, homodimer. Polymerizes to form a dynamic ring structure in a strictly GTP-dependent manner. Interacts directly with several other division proteins.

It localises to the cytoplasm. Functionally, essential cell division protein that forms a contractile ring structure (Z ring) at the future cell division site. The regulation of the ring assembly controls the timing and the location of cell division. One of the functions of the FtsZ ring is to recruit other cell division proteins to the septum to produce a new cell wall between the dividing cells. Binds GTP and shows GTPase activity. The polypeptide is Cell division protein FtsZ (Sodalis glossinidius).